We begin with the raw amino-acid sequence, 421 residues long: Zinc metalloproteinase-disintegrin-like crotastatin (421 aa).

The region spanning 10 to 206 is the Peptidase M12B domain; it reads KYVKLFLVAD…NMPQCILKKP (197 aa). N29 carries an N-linked (GlcNAc...) asparagine glycan. 3 disulfide bridges follow: C121–C201, C161–C185, and C163–C168. Residue H146 coordinates Zn(2+). The active site involves E147. Zn(2+)-binding residues include H150 and H156. Residues 214 to 299 form the Disintegrin domain; that stretch reads PAVCGNYFVE…TECTDRFQRN (86 aa). Ca(2+) contacts are provided by V216, N219, F221, E223, E226, and D229. Intrachain disulfides connect C217-C246, C228-C241, C230-C236, C240-C263, C254-C260, C259-C285, C272-C292, C279-C310, C303-C315, C322-C372, C337-C383, C350-C360, C367-C409, and C403-C414. Residues 278 to 280 carry the D/ECD-tripeptide motif; that stretch reads ECD. The Ca(2+) site is built by D280, M281, D283, D294, and R295.

The protein belongs to the venom metalloproteinase (M12B) family. P-III subfamily. P-IIIc sub-subfamily. As to quaternary structure, homodimer; disulfide-linked. Zn(2+) serves as cofactor. In terms of tissue distribution, expressed by the venom gland.

Its subcellular location is the secreted. Its function is as follows. Snake venom zinc metalloprotease that induces apoptosis in vascular endothelial cells (VEC), without degrading the extracellular matrix (it cannot cleave collagen) or inhibiting adhesion of VEC. Has also fibrinogenolytic and hemorrhagic activities. This Crotalus durissus terrificus (South American rattlesnake) protein is Zinc metalloproteinase-disintegrin-like crotastatin.